The sequence spans 178 residues: Caveolin-1 (178 aa).

Serine 2 carries the post-translational modification N-acetylserine. Serine 2 is modified (phosphoserine). Residues 2–94 form a required for homooligomerization region; the sequence is SGGKYVDSEG…WKASFTTFTV (93 aa). Topologically, residues 2–104 are cytoplasmic; sequence SGGKYVDSEG…TKYWFYRLLS (103 aa). Lysine 5 is modified (N6-acetyllysine; alternate). Residue lysine 5 forms a Glycyl lysine isopeptide (Lys-Gly) (interchain with G-Cter in ubiquitin); alternate linkage. A Phosphotyrosine modification is found at tyrosine 6. Phosphoserine is present on serine 9. Tyrosine 14 bears the Phosphotyrosine; by ABL1 mark. Tyrosine 25 carries the phosphotyrosine modification. Glycyl lysine isopeptide (Lys-Gly) (interchain with G-Cter in ubiquitin) cross-links involve residues lysine 26, lysine 30, lysine 39, lysine 47, and lysine 57. Residues 82–94 are interaction with CAVIN3; that stretch reads DGIWKASFTTFTV. Residues 105–125 constitute an intramembrane region (helical); it reads GIFGIPMALIWGVYFAILSFL. Residues 126–178 are Cytoplasmic-facing; that stretch reads HIWAVVPCIKSFLIEIQCISRVYSIYVHTFCDPLFEAIGKIFSNIRISTQKEI. Residues 131 to 142 are interacts with SPRY1, SPRY2, SPRY3 and SPRY4; sequence VPCIKSFLIEIQ. S-palmitoyl cysteine attachment occurs at residues cysteine 133, cysteine 143, and cysteine 156. The tract at residues 149-160 is interacts with SPRY1, SPRY2, and SPRY4; sequence SIYVHTFCDPLF. Positions 167–178 are interacts with SPRY1, SPRY2, SPRY3 and SPRY4; that stretch reads FSNIRISTQKEI.

It belongs to the caveolin family. In terms of assembly, homooligomer. Interacts with GLIPR2. Interacts with NOSTRIN. Interacts with SNAP25 and STX1A. Interacts (via the N-terminus) with DPP4; the interaction is direct. Interacts with CTNNB1, CDH1 and JUP. Interacts with PACSIN2; this interaction induces membrane tubulation. Interacts with SLC7A9. Interacts with BMX and BTK. Interacts with TGFBR1. Interacts with CAVIN3 (via leucine-zipper domain) in a cholesterol-sensitive manner. Interacts with CAVIN1. Interacts with EHD2 in a cholesterol-dependent manner. Forms a ternary complex with UBXN6 and VCP; mediates CAV1 targeting to lysosomes for degradation. Interacts with ABCG1; this interaction regulates ABCG1-mediated cholesterol efflux. Interacts with NEU3; this interaction enhances NEU3 sialidase activity within caveola. Interacts (via C-terminus) with SPRY1, SPRY2 (via C-terminus), SPRY3, and SPRY4. Interacts with IGFBP5; this interaction allows trafficking of IGFBP5 from the plasma membrane to the nucleus. Post-translationally, phosphorylated at Tyr-14 by ABL1 in response to oxidative stress. In terms of processing, ubiquitinated. Undergo monoubiquitination and multi- and/or polyubiquitination. Monoubiquitination of N-terminal lysines promotes integration in a ternary complex with UBXN6 and VCP which promotes oligomeric CAV1 targeting to lysosomes for degradation. Ubiquitinated by ZNRF1; leading to degradation and modulation of the TLR4-mediated immune response.

It localises to the golgi apparatus membrane. It is found in the cell membrane. The protein resides in the membrane. The protein localises to the caveola. Its subcellular location is the membrane raft. Functionally, may act as a scaffolding protein within caveolar membranes. Forms a stable heterooligomeric complex with CAV2 that targets to lipid rafts and drives caveolae formation. Mediates the recruitment of CAVIN proteins (CAVIN1/2/3/4) to the caveolae. Interacts directly with G-protein alpha subunits and can functionally regulate their activity. Involved in the costimulatory signal essential for T-cell receptor (TCR)-mediated T-cell activation. Its binding to DPP4 induces T-cell proliferation and NF-kappa-B activation in a T-cell receptor/CD3-dependent manner. Recruits CTNNB1 to caveolar membranes and may regulate CTNNB1-mediated signaling through the Wnt pathway. Negatively regulates TGFB1-mediated activation of SMAD2/3 by mediating the internalization of TGFBR1 from membrane rafts leading to its subsequent degradation. Binds 20(S)-hydroxycholesterol (20(S)-OHC). The polypeptide is Caveolin-1 (CAV1) (Echinops telfairi (Lesser hedgehog tenrec)).